A 789-amino-acid chain; its full sequence is Cadherin-6 (789 aa).

Positions 1–18 (MRTYRYFLLLFWVGQPYP) are cleaved as a signal peptide. Positions 19 to 53 (TFSNPLSKRTSGFPAKRRALELSANSRNELSRSKR) are excised as a propeptide. Cadherin domains are found at residues 54–159 (SWMW…EPIF), 160–268 (TKDV…PPRF), 269–383 (PQST…PPVF), 384–486 (SKPA…DNAP), and 487–608 (EFAE…LIHP). The Extracellular segment spans residues 54–615 (SWMWNQFFLL…IHPTGLSTGA (562 aa)). A glycan (N-linked (GlcNAc...) asparagine) is linked at Asn255. The tract at residues 259–288 (TDVNDNPPRFPQSTYQFKTPESSPPGTPIG) is disordered. Residues 269-279 (PQSTYQFKTPE) are compositionally biased toward polar residues. N-linked (GlcNAc...) asparagine glycans are attached at residues Asn399, Asn437, Asn455, and Asn536. A helical transmembrane segment spans residues 616–636 (LVAILLCIVILLVTVVLFAAL). The Cytoplasmic segment spans residues 637-789 (RRQRKKEPLI…YGGMDSDKDS (153 aa)). Phosphoserine is present on residues Ser785 and Ser789.

In terms of tissue distribution, highly expressed in kidney and brain.

The protein localises to the cell membrane. Cadherins are calcium-dependent cell adhesion proteins. They preferentially interact with themselves in a homophilic manner in connecting cells; cadherins may thus contribute to the sorting of heterogeneous cell types. In Rattus norvegicus (Rat), this protein is Cadherin-6 (Cdh6).